Reading from the N-terminus, the 179-residue chain is ATP synthase subunit delta (179 aa).

The protein belongs to the ATPase delta chain family. As to quaternary structure, F-type ATPases have 2 components, F(1) - the catalytic core - and F(0) - the membrane proton channel. F(1) has five subunits: alpha(3), beta(3), gamma(1), delta(1), epsilon(1). F(0) has three main subunits: a(1), b(2) and c(10-14). The alpha and beta chains form an alternating ring which encloses part of the gamma chain. F(1) is attached to F(0) by a central stalk formed by the gamma and epsilon chains, while a peripheral stalk is formed by the delta and b chains.

The protein localises to the cell membrane. In terms of biological role, f(1)F(0) ATP synthase produces ATP from ADP in the presence of a proton or sodium gradient. F-type ATPases consist of two structural domains, F(1) containing the extramembraneous catalytic core and F(0) containing the membrane proton channel, linked together by a central stalk and a peripheral stalk. During catalysis, ATP synthesis in the catalytic domain of F(1) is coupled via a rotary mechanism of the central stalk subunits to proton translocation. Its function is as follows. This protein is part of the stalk that links CF(0) to CF(1). It either transmits conformational changes from CF(0) to CF(1) or is implicated in proton conduction. The protein is ATP synthase subunit delta of Clostridium botulinum (strain Langeland / NCTC 10281 / Type F).